The sequence spans 498 residues: Glycerol kinase (498 aa).

T12 is an ADP binding site. ATP contacts are provided by T12, T13, and S14. T12 provides a ligand contact to sn-glycerol 3-phosphate. Residue R16 participates in ADP binding. Sn-glycerol 3-phosphate-binding residues include R82, E83, Y134, and D243. Residues R82, E83, Y134, D243, and Q244 each contribute to the glycerol site. ADP-binding residues include T265 and G308. Positions 265, 308, 312, and 409 each coordinate ATP. ADP is bound by residues G409 and N413.

This sequence belongs to the FGGY kinase family. In terms of assembly, homotetramer and homodimer (in equilibrium).

It catalyses the reaction glycerol + ATP = sn-glycerol 3-phosphate + ADP + H(+). It functions in the pathway polyol metabolism; glycerol degradation via glycerol kinase pathway; sn-glycerol 3-phosphate from glycerol: step 1/1. Its activity is regulated as follows. Activated by phosphorylation and inhibited by fructose 1,6-bisphosphate (FBP). In terms of biological role, key enzyme in the regulation of glycerol uptake and metabolism. Catalyzes the phosphorylation of glycerol to yield sn-glycerol 3-phosphate. This chain is Glycerol kinase, found in Clostridium botulinum (strain ATCC 19397 / Type A).